Here is a 227-residue protein sequence, read N- to C-terminus: MPEINTDHLDKQQVQLLAEMCILIDENDNKIGAETKKNCHLNENIEKGLLHRAFSVFLFNTENKLLLQQRSDAKITLPGCFTNTCCSHPLSNPGELEENDALGVRRAAQRRLKAELGIPLEEVPPEEINYLTRIHYKAQSDGIWGEHEIDYILLVRKNVTLNPDPNEIKSYCYVSKEELKELLKKAASGEIKITPWFKIIAETFLFKWWDNLNHLNQFVDHEKIYRI.

Residue lysine 36 coordinates substrate. Residues histidine 40 and histidine 51 each contribute to the Mg(2+) site. One can recognise a Nudix hydrolase domain in the interval leucine 49–isoleucine 199. Substrate contacts are provided by arginine 70 and lysine 74. Residue cysteine 86 is part of the active site. Residue serine 87 coordinates substrate. The Mg(2+) site is built by glutamate 146 and glutamate 148. The active site involves glutamate 148. Position 176 is an N6-acetyllysine (lysine 176). The Microbody targeting signal motif lies at tyrosine 225–isoleucine 227.

The protein belongs to the IPP isomerase type 1 family. Monomer. It depends on Mg(2+) as a cofactor.

Its subcellular location is the peroxisome. The enzyme catalyses isopentenyl diphosphate = dimethylallyl diphosphate. The protein operates within isoprenoid biosynthesis; dimethylallyl diphosphate biosynthesis; dimethylallyl diphosphate from isopentenyl diphosphate: step 1/1. Catalyzes the 1,3-allylic rearrangement of the homoallylic substrate isopentenyl (IPP) to its highly electrophilic allylic isomer, dimethylallyl diphosphate (DMAPP). This chain is Isopentenyl-diphosphate Delta-isomerase 1 (IDI1), found in Pongo abelii (Sumatran orangutan).